Reading from the N-terminus, the 465-residue chain is D(1C) dopamine receptor (465 aa).

The Extracellular portion of the chain corresponds to methionine 1–leucine 30. Residues asparagine 3 and asparagine 8 are each glycosylated (N-linked (GlcNAc...) asparagine). Residues threonine 31–isoleucine 54 traverse the membrane as a helical segment. Residues lysine 55–asparagine 65 lie on the Cytoplasmic side of the membrane. A helical transmembrane segment spans residues phenylalanine 66–alanine 92. Over glycine 93–cysteine 101 the chain is Extracellular. A disulfide bridge links cysteine 101 with cysteine 187. A helical membrane pass occupies residues aspartate 102 to leucine 124. Residues aspartate 125–arginine 143 are Cytoplasmic-facing. A helical transmembrane segment spans residues valine 144–tryptophan 168. Topologically, residues histidine 169 to arginine 193 are extracellular. The chain crosses the membrane as a helical span at residues threonine 194–tyrosine 219. Residues arginine 220–lysine 264 lie on the Cytoplasmic side of the membrane. Residues threonine 265–histidine 291 form a helical membrane-spanning segment. Over methionine 292–threonine 309 the chain is Extracellular. The helical transmembrane segment at phenylalanine 310–phenylalanine 334 threads the bilayer. Over arginine 335–tyrosine 465 the chain is Cytoplasmic. A lipid anchor (S-palmitoyl cysteine) is attached at cysteine 344.

This sequence belongs to the G-protein coupled receptor 1 family. In terms of tissue distribution, brain and kidney.

Its subcellular location is the cell membrane. It is found in the cell projection. The protein localises to the cilium membrane. This is one of the five types (D1 to D5) of receptors for dopamine. The activity of this receptor is mediated by G proteins which activate adenylyl cyclase. This Xenopus laevis (African clawed frog) protein is D(1C) dopamine receptor (drd1c).